The sequence spans 247 residues: Probable transcriptional regulatory protein Spro_2779 (247 aa).

The protein belongs to the TACO1 family.

It is found in the cytoplasm. The polypeptide is Probable transcriptional regulatory protein Spro_2779 (Serratia proteamaculans (strain 568)).